Here is a 339-residue protein sequence, read N- to C-terminus: Pyrimidine monooxygenase RutA (339 aa).

FMN is bound by residues 26-27 (IK), asparagine 92, glutamate 101, 117-118 (RY), and serine 167.

Belongs to the NtaA/SnaA/DszA monooxygenase family. RutA subfamily.

It catalyses the reaction uracil + FMNH2 + NADH + O2 = (Z)-3-ureidoacrylate + FMN + NAD(+) + H2O + H(+). The enzyme catalyses thymine + FMNH2 + NADH + O2 = (Z)-2-methylureidoacrylate + FMN + NAD(+) + H2O + H(+). Functionally, catalyzes the pyrimidine ring opening between N-3 and C-4 by an unusual flavin hydroperoxide-catalyzed mechanism, adding oxygen atoms in the process to yield ureidoacrylate peracid, that immediately reacts with FMN forming ureidoacrylate and FMN-N(5)-oxide. The FMN-N(5)-oxide reacts spontaneously with NADH to produce FMN. Requires the flavin reductase RutF to regenerate FMN in vivo. In Cronobacter sakazakii (strain ATCC BAA-894) (Enterobacter sakazakii), this protein is Pyrimidine monooxygenase RutA.